The chain runs to 205 residues: Melanocortin-2 receptor accessory protein 2 (205 aa).

N9 carries N-linked (GlcNAc...) asparagine glycosylation. The helical transmembrane segment at 45-65 (IVIGFWVGLAVFVIFMFFVLT) threads the bilayer. A Phosphoserine modification is found at S89.

Belongs to the MRAP family. Homodimer and heterodimer. Forms antiparallel homodimers and heterodimers with MRAP. Interacts with MC1R, MC2R, MC3R, MC4R and MC5R. Expressed in the adrenal gland and brain. Not expressed in other tissues.

Its subcellular location is the cell membrane. It localises to the endoplasmic reticulum membrane. In terms of biological role, modulator of melanocortin receptor 4 (MC4R), a receptor involved in energy homeostasis. Plays a central role in the control of energy homeostasis and body weight regulation by increasing ligand-sensitivity of MC4R and MC4R-mediated generation of cAMP. May also act as a negative regulator of MC2R: competes with MRAP for binding to MC2R and impairs the binding of corticotropin (ACTH) to MC2R. May also regulate activity of other melanocortin receptors (MC1R, MC3R and MC5R); however, additional evidence is required in vivo. This is Melanocortin-2 receptor accessory protein 2 (MRAP2) from Homo sapiens (Human).